A 310-amino-acid chain; its full sequence is MIIVTGGAGFIGSNIVKALNNIGYKDILVVDNLKDGTKFVNLVDLDIADYMDKEDFVASIVAGDDMGDIDAIFHEGACSSTTEWDGKYMMDNNYQYSKDILHFCLDRSIPFLYASSAATYGGRTDNFIEDRQYEQPLNVYGYSKFLFDQYVREILPQADSQICGFRYFNVYGPREGHKGSMASVAFHLNNQINAGERPKLFAGSENFKRDFIYVGDVADVNLWFWQNGVSGIFNCGTGRAESFQAVADAVVDYHQSGPVEYIEFPEKLKGRYQAYTQADLTKLRAAGYGKPFKTVAEGVKEYLAWLNRSV.

NADP(+) contacts are provided by residues 10-11, 31-32, Lys38, Lys53, 75-79, and Asn92; these read FI, DN, and EGACS. Residue Tyr140 is the Proton acceptor of the active site. Residue Lys144 participates in NADP(+) binding. Asn169 provides a ligand contact to substrate. Residues Val170 and Lys178 each coordinate NADP(+). Lys178 serves as the catalytic Proton acceptor. Substrate is bound by residues Ser180, His187, 201–204, Arg209, and Tyr272; that span reads FAGS.

Belongs to the NAD(P)-dependent epimerase/dehydratase family. HldD subfamily. Homopentamer. NADP(+) serves as cofactor.

It carries out the reaction ADP-D-glycero-beta-D-manno-heptose = ADP-L-glycero-beta-D-manno-heptose. Its pathway is nucleotide-sugar biosynthesis; ADP-L-glycero-beta-D-manno-heptose biosynthesis; ADP-L-glycero-beta-D-manno-heptose from D-glycero-beta-D-manno-heptose 7-phosphate: step 4/4. Its function is as follows. Catalyzes the interconversion between ADP-D-glycero-beta-D-manno-heptose and ADP-L-glycero-beta-D-manno-heptose via an epimerization at carbon 6 of the heptose. The sequence is that of ADP-L-glycero-D-manno-heptose-6-epimerase from Yersinia pseudotuberculosis serotype O:1b (strain IP 31758).